The primary structure comprises 897 residues: Isoleucine--tRNA ligase (897 aa).

The 'HIGH' region signature appears at 59–69; sequence PYANGDIHVGH. Glu553 contributes to the L-isoleucyl-5'-AMP binding site. The 'KMSKS' region motif lies at 594-598; that stretch reads KMSKS. An ATP-binding site is contributed by Lys597. Residues Cys866, Cys869, Cys883, and Cys886 each contribute to the Zn(2+) site.

It belongs to the class-I aminoacyl-tRNA synthetase family. IleS type 1 subfamily. In terms of assembly, monomer. Zn(2+) serves as cofactor.

The protein resides in the cytoplasm. The enzyme catalyses tRNA(Ile) + L-isoleucine + ATP = L-isoleucyl-tRNA(Ile) + AMP + diphosphate. Functionally, catalyzes the attachment of isoleucine to tRNA(Ile). As IleRS can inadvertently accommodate and process structurally similar amino acids such as valine, to avoid such errors it has two additional distinct tRNA(Ile)-dependent editing activities. One activity is designated as 'pretransfer' editing and involves the hydrolysis of activated Val-AMP. The other activity is designated 'posttransfer' editing and involves deacylation of mischarged Val-tRNA(Ile). The protein is Isoleucine--tRNA ligase of Mycoplasmopsis synoviae (strain 53) (Mycoplasma synoviae).